Consider the following 428-residue polypeptide: Enolase (428 aa).

Glutamine 163 is a binding site for (2R)-2-phosphoglycerate. The active-site Proton donor is the glutamate 205. Residues aspartate 242, glutamate 286, and aspartate 313 each contribute to the Mg(2+) site. Residues lysine 338, arginine 367, serine 368, and lysine 389 each contribute to the (2R)-2-phosphoglycerate site. Residue lysine 338 is the Proton acceptor of the active site.

This sequence belongs to the enolase family. Requires Mg(2+) as cofactor.

It localises to the cytoplasm. The protein resides in the secreted. The protein localises to the cell surface. It carries out the reaction (2R)-2-phosphoglycerate = phosphoenolpyruvate + H2O. The protein operates within carbohydrate degradation; glycolysis; pyruvate from D-glyceraldehyde 3-phosphate: step 4/5. Its function is as follows. Catalyzes the reversible conversion of 2-phosphoglycerate (2-PG) into phosphoenolpyruvate (PEP). It is essential for the degradation of carbohydrates via glycolysis. This is Enolase from Bordetella avium (strain 197N).